A 549-amino-acid chain; its full sequence is MAVDSPLQSRMVSATTSEKDVKALKFIEEMTRNPDSVQEKVLGEILTRNSNTEYLKRFDLDGVVDRKTFKSKVPVVTYEDLKPEIQRISNGDCSPILSSHPITEFLTSSGTSAGERKLMPTIEEDLDRRQLLYSLLMPVMNLYVPGLDKGKGLYFLFVKSESKTSGGLPARPVLTSYYKSDHFKRRPYDPYNVYTSPNEAILCSDSSQSMYAQMLCGLLMRHEVLRLGAVFASGLLRAISFLQNNWKELARDISTGTLSSRIFDPAIKNRMSKILTKPDQELAEFLVGVCSQENWEGIITKIWPNTKYLDVIVTGAMAQYIPTLEYYSGGLPMACTMYASSESYFGINLKPMCKPSEVSYTIMPNMAYFEFLPHNHDGDGAAEASLDETSLVELANVEVGKEYELVITTYAGLYRYRVGDILRVTGFHNSAPQFKFIRRKNVLLSVESDKTDEAELQKAVENASRLFAEQGTRVIEYTSYAETKTIPGHYVIYWELLGRDQSNALMSEEVMAKCCLEMEESLNSVYRQSRVADKSIGPLGDTCGTERYV.

The protein belongs to the IAA-amido conjugating enzyme family. In terms of tissue distribution, expressed in flowers, pollen, cotyledons, stipules, true leaves, hypocotyls, and all parts of the roots except for the primary root tips.

Catalyzes the synthesis of indole-3-acetic acid (IAA)-amino acid conjugates, providing a mechanism for the plant to cope with the presence of excess auxin. Strongly reactive with Glu, Gln, Trp, Asp, Ala, Leu, Phe, Gly, Tyr, Met, Ile and Val. Little or no product formation with His, Ser, Thr, Arg, Lys, or Cys. Also active on pyruvic and butyric acid analogs of IAA, PAA and the synthetic auxin naphthaleneacetic acid (NAA). The two chlorinated synthetic auxin herbicides 2,4-D and 3,6-dichloro-o-anisic acid (dicamba) cannot be used as substrates. The sequence is that of Indole-3-acetic acid-amido synthetase GH3.2 (GH3.2) from Arabidopsis thaliana (Mouse-ear cress).